The chain runs to 97 residues: Exodeoxyribonuclease 7 small subunit (97 aa).

A disordered region spans residues 1–22 (MAKTASPGATPPGNGTEPLPDN).

It belongs to the XseB family. Heterooligomer composed of large and small subunits.

Its subcellular location is the cytoplasm. The enzyme catalyses Exonucleolytic cleavage in either 5'- to 3'- or 3'- to 5'-direction to yield nucleoside 5'-phosphates.. Bidirectionally degrades single-stranded DNA into large acid-insoluble oligonucleotides, which are then degraded further into small acid-soluble oligonucleotides. The polypeptide is Exodeoxyribonuclease 7 small subunit (Burkholderia cenocepacia (strain HI2424)).